We begin with the raw amino-acid sequence, 208 residues long: Small ribosomal subunit protein uS3 (208 aa).

Positions 16–85 (VDEYLKNKLP…KPQIEVKQIE (70 aa)) constitute a KH type-2 domain.

The protein belongs to the universal ribosomal protein uS3 family. Part of the 30S ribosomal subunit.

Binds the lower part of the 30S subunit head. The sequence is that of Small ribosomal subunit protein uS3 from Methanococcus aeolicus (strain ATCC BAA-1280 / DSM 17508 / OCM 812 / Nankai-3).